A 68-amino-acid polypeptide reads, in one-letter code: DNA-directed RNA polymerase subunit Rpo10 (68 aa).

Residues Cys7, Cys10, Cys44, and Cys45 each coordinate Zn(2+).

Belongs to the archaeal Rpo10/eukaryotic RPB10 RNA polymerase subunit family. As to quaternary structure, part of the RNA polymerase complex. It depends on Zn(2+) as a cofactor.

Its subcellular location is the cytoplasm. It catalyses the reaction RNA(n) + a ribonucleoside 5'-triphosphate = RNA(n+1) + diphosphate. DNA-dependent RNA polymerase (RNAP) catalyzes the transcription of DNA into RNA using the four ribonucleoside triphosphates as substrates. The protein is DNA-directed RNA polymerase subunit Rpo10 of Methanococcus vannielii (strain ATCC 35089 / DSM 1224 / JCM 13029 / OCM 148 / SB).